A 279-amino-acid polypeptide reads, in one-letter code: Ribose-phosphate pyrophosphokinase (279 aa).

Residues 31-33 and 88-89 each bind ATP; these read DGE and RQ. Mg(2+) contacts are provided by H121 and D159. K182 is a catalytic residue. D-ribose 5-phosphate-binding positions include R184, D208, and 212–216; that span reads STGGT.

The protein belongs to the ribose-phosphate pyrophosphokinase family. Class III (archaeal) subfamily. Mg(2+) serves as cofactor.

It localises to the cytoplasm. It catalyses the reaction D-ribose 5-phosphate + ATP = 5-phospho-alpha-D-ribose 1-diphosphate + AMP + H(+). The protein operates within metabolic intermediate biosynthesis; 5-phospho-alpha-D-ribose 1-diphosphate biosynthesis; 5-phospho-alpha-D-ribose 1-diphosphate from D-ribose 5-phosphate (route I): step 1/1. In terms of biological role, involved in the biosynthesis of the central metabolite phospho-alpha-D-ribosyl-1-pyrophosphate (PRPP) via the transfer of pyrophosphoryl group from ATP to 1-hydroxyl of ribose-5-phosphate (Rib-5-P). This is Ribose-phosphate pyrophosphokinase from Pyrococcus furiosus (strain ATCC 43587 / DSM 3638 / JCM 8422 / Vc1).